Here is a 346-residue protein sequence, read N- to C-terminus: Biotin synthase (346 aa).

In terms of domain architecture, Radical SAM core spans 38 to 256 (RQVQVSTLLS…IAIARIMMPT (219 aa)). The [4Fe-4S] cluster site is built by Cys53, Cys57, and Cys60. [2Fe-2S] cluster contacts are provided by Cys97, Cys128, Cys188, and Arg260.

The protein belongs to the radical SAM superfamily. Biotin synthase family. Homodimer. [4Fe-4S] cluster is required as a cofactor. [2Fe-2S] cluster serves as cofactor.

The catalysed reaction is (4R,5S)-dethiobiotin + (sulfur carrier)-SH + 2 reduced [2Fe-2S]-[ferredoxin] + 2 S-adenosyl-L-methionine = (sulfur carrier)-H + biotin + 2 5'-deoxyadenosine + 2 L-methionine + 2 oxidized [2Fe-2S]-[ferredoxin]. It participates in cofactor biosynthesis; biotin biosynthesis; biotin from 7,8-diaminononanoate: step 2/2. Its function is as follows. Catalyzes the conversion of dethiobiotin (DTB) to biotin by the insertion of a sulfur atom into dethiobiotin via a radical-based mechanism. This Klebsiella pneumoniae (strain 342) protein is Biotin synthase.